Here is a 244-residue protein sequence, read N- to C-terminus: Carboxy-S-adenosyl-L-methionine synthase (244 aa).

S-adenosyl-L-methionine contacts are provided by residues tyrosine 41, 66-68, 91-92, asparagine 134, and arginine 201; these read GCS and DN.

This sequence belongs to the class I-like SAM-binding methyltransferase superfamily. Cx-SAM synthase family. In terms of assembly, homodimer.

It carries out the reaction prephenate + S-adenosyl-L-methionine = carboxy-S-adenosyl-L-methionine + 3-phenylpyruvate + H2O. Its function is as follows. Catalyzes the conversion of S-adenosyl-L-methionine (SAM) to carboxy-S-adenosyl-L-methionine (Cx-SAM). This Colwellia psychrerythraea (strain 34H / ATCC BAA-681) (Vibrio psychroerythus) protein is Carboxy-S-adenosyl-L-methionine synthase.